A 1237-amino-acid chain; its full sequence is Mediator of RNA polymerase II transcription subunit 5 (1237 aa).

Disordered regions lie at residues 1109-1131 (DDEP…TSNA) and 1202-1226 (HGAQ…ADSG). A compositionally biased stretch (low complexity) spans 1119-1131 (HAAANATSHTSNA).

It belongs to the Mediator complex subunit 5 family. Component of the Mediator complex.

Its subcellular location is the nucleus. In terms of biological role, component of the Mediator complex, a coactivator involved in the regulated transcription of nearly all RNA polymerase II-dependent genes. Mediator functions as a bridge to convey information from gene-specific regulatory proteins to the basal RNA polymerase II transcription machinery. Mediator is recruited to promoters by direct interactions with regulatory proteins and serves as a scaffold for the assembly of a functional preinitiation complex with RNA polymerase II and the general transcription factors. This Mycosarcoma maydis (Corn smut fungus) protein is Mediator of RNA polymerase II transcription subunit 5 (NUT1).